A 335-amino-acid chain; its full sequence is MKIYSALLLAGTALFFTHPALATVCRNSNGTATDIFYDLSDVFTSGNNQPGQVVTLPEKSGWVGVNATCPAGTTVNYTYRSYVSELPVQSTEGNFKYLKLNDYLLGAMSITDSVAGVFYPPRNYILMGVDYNVSQQKPFGVQDSKLVFKLKVIRPFINMVTIPRQTMFTVYVTTSTGDALSTPVYTISYSGKVEVPQNCEVNAGQVVEFDFGDIGASLFSQAGAGNRPQGVTPQTKTIAIKCTNVAAQAYLSMRLEAEKASGQAMVSDNPDLGFVVANSNGTPLTPNNLSSKIPFHLDDNAAARVGIRAWPISVTGIKPAEGPFTARGYLRVDYD.

Residues 1–22 (MKIYSALLLAGTALFFTHPALA) form the signal peptide.

Belongs to the fimbrial protein family.

It is found in the fimbrium. Functionally, involved in regulation of length and mediation of adhesion of type 1 fimbriae (but not necessary for the production of fimbriae). A mannose-binding adhesin. The chain is Type 1 fimbrin D-mannose specific adhesin (fimH) from Salmonella typhimurium (strain LT2 / SGSC1412 / ATCC 700720).